We begin with the raw amino-acid sequence, 111 residues long: Ribosome-binding factor A (111 aa).

The protein belongs to the RbfA family. Monomer. Binds 30S ribosomal subunits, but not 50S ribosomal subunits or 70S ribosomes.

It is found in the cytoplasm. Its function is as follows. One of several proteins that assist in the late maturation steps of the functional core of the 30S ribosomal subunit. Associates with free 30S ribosomal subunits (but not with 30S subunits that are part of 70S ribosomes or polysomes). Required for efficient processing of 16S rRNA. May interact with the 5'-terminal helix region of 16S rRNA. The protein is Ribosome-binding factor A of Helicobacter acinonychis (strain Sheeba).